An 831-amino-acid polypeptide reads, in one-letter code: MELSMFGREDTNSSQWGEVHGPFMLEEIVCQAQNMLTSRGIFMKSNPLKYALPLLLLQMSVIIVTSRLIFRVLQPLKQGMISAQVLTGVVLGPSFLGHNVIYMNMFLPAGGKIIIQTLSNVGFVIHLFLLGLKIDGSIIRKAGSKAILIGTASYAFPFSLGNLTIMFISKTMGLPSDVISCTSSAISLSSMTSFPVTTTVLAELNILNSELGRLATHCSMVCEVCSWFVALAFNLYTRDRTMTSLYALSMIIGLLLVIYFVFRPIIVWLTQRKTKSMDKKDVVPFFPVLLLLSIASLSGEAMGVHAAFGAFWLGVSLPDGPPLGTELAAKLEMFASNLFLPCFIAISGLQTNFFEITESHEHHVVMIEIILLITYGCKFLGTAAASAYCQTQIGDALCLAFLMCCQGIIEVYTTIVWKDAQVVDTECFNLVIITILFVTGISRFLVVYLYDPSKRYKSKSKRTILNTRQHNLQLRLLLGLYNVENVPSMVNLLEATYPTRFNPISFFTLHLVELKGRAHALLTPHHQMNKLDPNTAQSTHIVNAFQRFEQKYQGALMAQHFTAAAPYSSINNDICTLALDKKATLIVIPFHKQYAIDGTVGQVNGPIRTINLNVLDAAPCSVAIFIDRGETEGRRSVLMTNTWQNVAMLFIGGKDDAEALALCMRMAEKPDLNVTMIHFRHKSALQDEDYSDMSEYNLISDFKSYAANKGKIHYVEEIVRDGVETTQVISSLGDAYDMVLVGRDHDLESSVLYGLTDWSECPELGVIGDMLTSPDFHFSVLVVHQQQGDDLLAMDDSYKLPNVEHQKIGDTGIQQRFSAEEGFTTIDLGKR.

Transmembrane regions (helical) follow at residues 50–70 (YALPLLLLQMSVIIVTSRLIF), 89–109 (VVLGPSFLGHNVIYMNMFLPA), 112–132 (KIIIQTLSNVGFVIHLFLLGL), 147–167 (ILIGTASYAFPFSLGNLTIMF), 214–234 (LATHCSMVCEVCSWFVALAFN), 250–270 (MIIGLLLVIYFVFRPIIVWLT), 282–302 (VVPFFPVLLLLSIASLSGEAM), 303–323 (GVHAAFGAFWLGVSLPDGPPL), 334–354 (FASNLFLPCFIAISGLQTNFF), 364–384 (VVMIEIILLITYGCKFLGTAA), 397–417 (LCLAFLMCCQGIIEVYTTIVW), and 430–450 (LVIITILFVTGISRFLVVYLY).

Belongs to the monovalent cation:proton antiporter 2 (CPA2) transporter (TC 2.A.37) family. CHX (TC 2.A.37.4) subfamily. As to expression, preferentially expressed in pollen before and after germination. Detected in pollen grains within anthers of the flower buds or in pollen on fully open flowers and on the stigma, and in pollen tubes growing in the style. Weakly expressed in roots.

It localises to the cell membrane. Its function is as follows. High-affinity potassium transporter that plays a role in K(+) acquisition. May operate as a K(+)/H(+) symporter. The protein is Cation/H(+) symporter 13 (CHX13) of Arabidopsis thaliana (Mouse-ear cress).